Here is a 124-residue protein sequence, read N- to C-terminus: Group 1 truncated hemoglobin GlbN (124 aa).

The heme site is built by His-46, His-70, and His-117.

The protein belongs to the truncated hemoglobin family. Group I subfamily. Monomer. Heme serves as cofactor.

Its function is as follows. Forms a very stable complex with oxygen. The oxygen dissociation rate is 0.011 sec(-1). The sequence is that of Group 1 truncated hemoglobin GlbN (glbN) from Synechocystis sp. (strain ATCC 27184 / PCC 6803 / Kazusa).